The sequence spans 179 residues: Ribosome maturation factor RimM (179 aa).

A PRC barrel domain is found at 95 to 174 (KDEFFYFDIL…QIFCTQDAFL (80 aa)).

Belongs to the RimM family. As to quaternary structure, binds ribosomal protein uS19.

The protein resides in the cytoplasm. Its function is as follows. An accessory protein needed during the final step in the assembly of 30S ribosomal subunit, possibly for assembly of the head region. Essential for efficient processing of 16S rRNA. May be needed both before and after RbfA during the maturation of 16S rRNA. It has affinity for free ribosomal 30S subunits but not for 70S ribosomes. This Campylobacter jejuni subsp. jejuni serotype O:2 (strain ATCC 700819 / NCTC 11168) protein is Ribosome maturation factor RimM.